The sequence spans 285 residues: 4,4'-diapophytoene synthase (285 aa).

Residues 18–21 (YSKS), Tyr-41, and Arg-45 each bind (2E,6E)-farnesyl diphosphate. Asp-48 and Asp-52 together coordinate Mg(2+). Gln-163 is a binding site for (2E,6E)-farnesyl diphosphate. Position 166 (Asn-166) interacts with Mg(2+). Arg-169 is a (2E,6E)-farnesyl diphosphate binding site. Asp-170 lines the Mg(2+) pocket. Residue Tyr-247 coordinates (2E,6E)-farnesyl diphosphate.

It belongs to the phytoene/squalene synthase family. CrtM subfamily. The cofactor is Mg(2+).

It catalyses the reaction 2 (2E,6E)-farnesyl diphosphate = 15-cis-4,4'-diapophytoene + 2 diphosphate. Its pathway is carotenoid biosynthesis; staphyloxanthin biosynthesis; staphyloxanthin from farnesyl diphosphate: step 1/5. Functionally, involved in the biosynthesis of the yellow-orange carotenoid staphyloxanthin, which plays a role in the virulence via its protective function against oxidative stress. Catalyzes the head-to-head condensation of two molecules of farnesyl diphosphate (FPP) into the colorless C(30) carotenoid 4,4'-diapophytoene (dehydrosqualene). The chain is 4,4'-diapophytoene synthase (crtM) from Staphylococcus haemolyticus (strain JCSC1435).